The primary structure comprises 269 residues: Phosphate import ATP-binding protein PstB 1 (269 aa).

The 242-residue stretch at 23–264 (LSTEDLNVYY…PKIKAAEDYV (242 aa)) folds into the ABC transporter domain. Residue 55–62 (GASGSGKS) participates in ATP binding.

This sequence belongs to the ABC transporter superfamily. Phosphate importer (TC 3.A.1.7) family. In terms of assembly, the complex is composed of two ATP-binding proteins (PstB), two transmembrane proteins (PstC and PstA) and a solute-binding protein (PstS).

The protein resides in the cell membrane. The catalysed reaction is phosphate(out) + ATP + H2O = ADP + 2 phosphate(in) + H(+). Functionally, part of the ABC transporter complex PstSACB involved in phosphate import. Responsible for energy coupling to the transport system. The polypeptide is Phosphate import ATP-binding protein PstB 1 (Latilactobacillus sakei subsp. sakei (strain 23K) (Lactobacillus sakei subsp. sakei)).